The chain runs to 258 residues: Small ribosomal subunit protein uS2 (258 aa).

It belongs to the universal ribosomal protein uS2 family.

This Granulibacter bethesdensis (strain ATCC BAA-1260 / CGDNIH1) protein is Small ribosomal subunit protein uS2.